A 584-amino-acid chain; its full sequence is Arginine--tRNA ligase (584 aa).

The 'HIGH' region signature appears at 127 to 137; the sequence is PNTNKPLHIGH.

It belongs to the class-I aminoacyl-tRNA synthetase family. As to quaternary structure, monomer.

It is found in the cytoplasm. It carries out the reaction tRNA(Arg) + L-arginine + ATP = L-arginyl-tRNA(Arg) + AMP + diphosphate. The polypeptide is Arginine--tRNA ligase (Borrelia hermsii (strain HS1 / DAH)).